The primary structure comprises 217 residues: Probable transaldolase (217 aa).

Lysine 83 (schiff-base intermediate with substrate) is an active-site residue.

This sequence belongs to the transaldolase family. Type 3B subfamily.

Its subcellular location is the cytoplasm. The catalysed reaction is D-sedoheptulose 7-phosphate + D-glyceraldehyde 3-phosphate = D-erythrose 4-phosphate + beta-D-fructose 6-phosphate. It participates in carbohydrate degradation; pentose phosphate pathway; D-glyceraldehyde 3-phosphate and beta-D-fructose 6-phosphate from D-ribose 5-phosphate and D-xylulose 5-phosphate (non-oxidative stage): step 2/3. Transaldolase is important for the balance of metabolites in the pentose-phosphate pathway. This Brucella melitensis biotype 1 (strain ATCC 23456 / CCUG 17765 / NCTC 10094 / 16M) protein is Probable transaldolase.